The chain runs to 370 residues: DNA polymerase IV (370 aa).

The UmuC domain occupies 14 to 198 (IIHIDMDAFF…LPIEKFYGVG (185 aa)). D18 and D116 together coordinate Mg(2+). E117 is an active-site residue.

It belongs to the DNA polymerase type-Y family. In terms of assembly, monomer. It depends on Mg(2+) as a cofactor.

It is found in the cytoplasm. The catalysed reaction is DNA(n) + a 2'-deoxyribonucleoside 5'-triphosphate = DNA(n+1) + diphosphate. Poorly processive, error-prone DNA polymerase involved in untargeted mutagenesis. Copies undamaged DNA at stalled replication forks, which arise in vivo from mismatched or misaligned primer ends. These misaligned primers can be extended by PolIV. Exhibits no 3'-5' exonuclease (proofreading) activity. May be involved in translesional synthesis, in conjunction with the beta clamp from PolIII. This chain is DNA polymerase IV, found in Streptococcus mutans serotype c (strain ATCC 700610 / UA159).